The primary structure comprises 20 residues: Serum amyloid P-component (20 aa).

In terms of domain architecture, Pentraxin (PTX) spans 1-20 (ZPIDLMGKVFVFDKELSPBI).

This sequence belongs to the pentraxin family. In terms of assembly, homopentamer. Pentraxin (or pentaxin) have a discoid arrangement of 5 non-covalently bound subunits.

It localises to the secreted. The protein is Serum amyloid P-component of Pleuronectes platessa (European plaice).